The primary structure comprises 435 residues: Glutamate-1-semialdehyde 2,1-aminomutase (435 aa).

The residue at position 266 (lysine 266) is an N6-(pyridoxal phosphate)lysine.

Belongs to the class-III pyridoxal-phosphate-dependent aminotransferase family. HemL subfamily. In terms of assembly, homodimer. Requires pyridoxal 5'-phosphate as cofactor.

Its subcellular location is the cytoplasm. It carries out the reaction (S)-4-amino-5-oxopentanoate = 5-aminolevulinate. It participates in porphyrin-containing compound metabolism; protoporphyrin-IX biosynthesis; 5-aminolevulinate from L-glutamyl-tRNA(Glu): step 2/2. In Nitrosomonas europaea (strain ATCC 19718 / CIP 103999 / KCTC 2705 / NBRC 14298), this protein is Glutamate-1-semialdehyde 2,1-aminomutase.